Here is a 365-residue protein sequence, read N- to C-terminus: Nudix hydrolase 24, chloroplastic (365 aa).

The N-terminal 30 residues, 1-30 (MASAFCSLCPTPTSLFSSHALIPTLQWRSS), are a transit peptide targeting the chloroplast. The 142-residue stretch at 196 to 337 (GYAIHVNGYV…KDSCSLVIID (142 aa)) folds into the Nudix hydrolase domain. Positions 235–256 (GGLPHGISVCENLVKECEEEAG) match the Nudix box motif. 2 residues coordinate Mg(2+): Glu-250 and Glu-254.

Belongs to the Nudix hydrolase family. Mg(2+) is required as a cofactor. Requires Mn(2+) as cofactor. Expressed in leaves.

The protein resides in the plastid. The protein localises to the chloroplast. Functionally, probably mediates the hydrolysis of some nucleoside diphosphate derivatives. This is Nudix hydrolase 24, chloroplastic (NUDT24) from Arabidopsis thaliana (Mouse-ear cress).